The sequence spans 489 residues: Betaine aldehyde dehydrogenase (489 aa).

Thr-26 and Asp-93 together coordinate K(+). 150-152 (GAW) is a binding site for NAD(+). Lys-162 serves as the catalytic Charge relay system. 176 to 179 (KPSE) contacts NAD(+). Val-180 serves as a coordination point for K(+). 229 to 232 (GVET) provides a ligand contact to NAD(+). Leu-245 contacts K(+). Residue Glu-251 is the Proton acceptor of the active site. Residues Gly-253, Cys-285, and Glu-386 each coordinate NAD(+). The active-site Nucleophile is the Cys-285. Cys-285 carries the post-translational modification Cysteine sulfenic acid (-SOH). Residues Lys-456 and Gly-459 each coordinate K(+). Glu-463 (charge relay system) is an active-site residue.

It belongs to the aldehyde dehydrogenase family. As to quaternary structure, dimer of dimers. The cofactor is K(+).

The catalysed reaction is betaine aldehyde + NAD(+) + H2O = glycine betaine + NADH + 2 H(+). It functions in the pathway amine and polyamine biosynthesis; betaine biosynthesis via choline pathway; betaine from betaine aldehyde: step 1/1. Functionally, involved in the biosynthesis of the osmoprotectant glycine betaine. Catalyzes the irreversible oxidation of betaine aldehyde to the corresponding acid. In Burkholderia vietnamiensis (strain G4 / LMG 22486) (Burkholderia cepacia (strain R1808)), this protein is Betaine aldehyde dehydrogenase.